The chain runs to 514 residues: Pleiotropic regulator 1 (514 aa).

Met1 carries the N-acetylmethionine modification. Ser119 carries the phosphoserine modification. The disordered stretch occupies residues 135–160; it reads KADANRTAPSGSEYRHPGASDRPQPT. Ser201 is modified (phosphoserine). WD repeat units lie at residues 202 to 241, 244 to 283, 286 to 325, 328 to 367, 370 to 410, 411 to 449, and 460 to 499; these read GHLGWVRCIAVEPGNQWFVTGSADRTIKIWDLASGKLKLS, GHISTVRGVIVSTRSPYLFSCGEDKQVKCWDLEYNKVIRH, GHLSAVYGLDLHPTIDVLVTCSRDSTARIWDVRTKASVHT, GHTNAVATVRCQAAEPQIITGSHDTTIRLWDLVAGKTRVT, NHKK…QNLS, GHNAIINTLTVNSDGVLVSGADNGTMHLWDWRTGYNFQR, and DSESGIFACAFDQSESRLLTAEADKTIKVYREDDTATEET. Ser391 carries the phosphoserine modification.

The protein belongs to the WD repeat PRL1/PRL2 family. As to quaternary structure, identified in the spliceosome C complex. Component of the PRP19-CDC5L splicing complex composed of a core complex comprising a homotetramer of PRPF19, CDC5L, PLRG1 and BCAS2, and at least three less stably associated proteins CTNNBL1, CWC15 and HSPA8. Interacts (via its WD40 repeat domain) directly with CDC5L (via its C-terminal); the interaction is required for mRNA splicing but not for spliceosome assembly. Component of the minor spliceosome, which splices U12-type introns. Within this complex, interacts with CRIPT. Also interacts directly in the complex with BCAS2 and PRPF19. Interacts with USB1.

It localises to the nucleus. It is found in the nucleus speckle. Its function is as follows. Involved in pre-mRNA splicing as component of the spliceosome. Component of the PRP19-CDC5L complex that forms an integral part of the spliceosome and is required for activating pre-mRNA splicing. As a component of the minor spliceosome, involved in the splicing of U12-type introns in pre-mRNAs. The protein is Pleiotropic regulator 1 (PLRG1) of Homo sapiens (Human).